Reading from the N-terminus, the 201-residue chain is 3-isopropylmalate dehydratase small subunit (201 aa).

The protein belongs to the LeuD family. LeuD type 1 subfamily. Heterodimer of LeuC and LeuD.

The enzyme catalyses (2R,3S)-3-isopropylmalate = (2S)-2-isopropylmalate. The protein operates within amino-acid biosynthesis; L-leucine biosynthesis; L-leucine from 3-methyl-2-oxobutanoate: step 2/4. In terms of biological role, catalyzes the isomerization between 2-isopropylmalate and 3-isopropylmalate, via the formation of 2-isopropylmaleate. This is 3-isopropylmalate dehydratase small subunit from Methylorubrum extorquens (strain CM4 / NCIMB 13688) (Methylobacterium extorquens).